We begin with the raw amino-acid sequence, 481 residues long: UDP-N-acetylmuramoyl-L-alanyl-D-glutamate--L-lysine ligase (481 aa).

Position 42 (Ser42) interacts with UDP-N-acetyl-alpha-D-muramoyl-L-alanyl-D-glutamate. Residue 118 to 124 (GTKGKTT) participates in ATP binding. UDP-N-acetyl-alpha-D-muramoyl-L-alanyl-D-glutamate-binding positions include Gln158, 160–161 (TT), Ser187, and Arg195. Position 229 is an N6-carboxylysine (Lys229). An L-lysine recognition motif motif is present at residues 404 to 407 (DDPN).

The protein belongs to the MurCDEF family. MurE subfamily. In terms of processing, carboxylation is probably crucial for Mg(2+) binding and, consequently, for the gamma-phosphate positioning of ATP.

Its subcellular location is the cytoplasm. The enzyme catalyses UDP-N-acetyl-alpha-D-muramoyl-L-alanyl-D-glutamate + L-lysine + ATP = UDP-N-acetyl-alpha-D-muramoyl-L-alanyl-gamma-D-glutamyl-L-lysine + ADP + phosphate + H(+). It participates in cell wall biogenesis; peptidoglycan biosynthesis. Functionally, catalyzes the addition of L-lysine to the nucleotide precursor UDP-N-acetylmuramoyl-L-alanyl-D-glutamate (UMAG) in the biosynthesis of bacterial cell-wall peptidoglycan. This is UDP-N-acetylmuramoyl-L-alanyl-D-glutamate--L-lysine ligase from Streptococcus pyogenes serotype M4 (strain MGAS10750).